The primary structure comprises 693 residues: Endoprotease bli (693 aa).

Residues Met-1–Ala-20 form the signal peptide. Residues Ile-21–Arg-116 constitute a propeptide, inhibition peptide. Ca(2+) is bound at residue Asp-161. Residues Gln-167–Val-482 form the Peptidase S8 domain. An N-linked (GlcNAc...) asparagine glycan is attached at Asn-194. The Charge relay system role is filled by Asp-201. Asp-202 contributes to the substrate binding site. Residues Asp-210, Asp-222, Asp-227, and Asp-229 each contribute to the Ca(2+) site. Residues Tyr-215–Thr-242 form a disordered region. Asp-237–Asn-238 provides a ligand contact to substrate. His-240 serves as the catalytic Charge relay system. Ca(2+)-binding residues include Ile-251, Asn-254, Tyr-256, and Gly-258. 2 disulfides stabilise this stretch: Cys-257-Cys-406 and Cys-349-Cys-379. Substrate-binding positions include Glu-282, Ser-299–Asp-304, Asp-310, and Ala-338–Asn-341. Asp-304 provides a ligand contact to Ca(2+). Asp-347 provides a ligand contact to Ca(2+). Asp-352 and Tyr-354 together coordinate substrate. Position 377 (Glu-377) interacts with Ca(2+). Ser-414 (charge relay system) is an active-site residue. Ser-414 contacts substrate. Residues Asn-433 and Asn-518 are each glycosylated (N-linked (GlcNAc...) asparagine). The 139-residue stretch at Thr-490–Pro-628 folds into the P/Homo B domain. Cys-497 and Cys-526 are oxidised to a cystine. Residues Ala-629–Val-693 form a disordered region. A compositionally biased stretch (basic and acidic residues) spans Asp-668–Lys-681.

The protein belongs to the peptidase S8 family. Furin subfamily. Ca(2+) is required as a cofactor. In terms of processing, N-glycosylated. The inhibition peptide, which plays the role of an intramolecular chaperone, is probably autocatalytically removed in the endoplasmic reticulum (ER) and remains non-covalently bound as a potent autoinhibitor. Probably following transport to the trans Golgi, a second cleavage within the inhibition propeptide results in propeptide dissociation and bli activation.

It localises to the secreted. The enzyme catalyses Release of mature proteins from their proproteins by cleavage of -Arg-Xaa-Yaa-Arg-|-Zaa- bonds, where Xaa can be any amino acid and Yaa is Arg or Lys. Releases albumin, complement component C3 and von Willebrand factor from their respective precursors.. Inhibited by the propeptide before the second cleavage. Inhibited by ethylenediaminetetraacetic acid (EDTA), ZnSO(4) and chloroketone DEC-RVKR-CMK. In terms of biological role, serine endoprotease which cleaves substrates at the RX(K/R)R consensus motif. The polypeptide is Endoprotease bli (Onchocerca volvulus).